A 193-amino-acid chain; its full sequence is Non-specific lipid transfer protein GPI-anchored 1 (193 aa).

A signal peptide spans 1-22 (MKGLHLHLVLVTMTIVASIAAA). Cystine bridges form between C35–C76, C45–C60, C61–C106, and C74–C116. N110 and N135 each carry an N-linked (GlcNAc...) asparagine glycan. The tract at residues 138–161 (TTPVAPAGKSPATPATSTDKGGSA) is disordered. A lipid anchor (GPI-anchor amidated aspartate) is attached at D165. Residues 166–193 (GHAVVALAVALMAVSFVLTLPRHVTLGM) constitute a propeptide, removed in mature form.

The protein belongs to the plant LTP family. In terms of processing, O-glycosylated on hydroxyprolines; noncontiguous hydroxylproline residues are glycosylated with arabinogalactan. As to expression, up-regulated in the epidermis of stems and leaves. Expressed in the epidermis, stem cortex, vascular bundles and mesophyll cells in root tips, cotyledons, seedlings, leaves, caulines, flowers, siliques, pollen, and early-developing seeds.

It is found in the cell membrane. The protein localises to the secreted. The protein resides in the cell wall. It localises to the endoplasmic reticulum. Its subcellular location is the golgi apparatus. In terms of biological role, lipid transfer protein that, together with LTPG2, binds to lipids and functions as a component of the cuticular lipid export machinery that performs extensive export of intracellular lipids (e.g. C29 alkane) from epidermal cells to the surface to build the cuticular wax layer and silique walls. Involved in the establishment of resistance to the necrotrophic fungal pathogen Alternaria brassicicola. Contributes to pre-invasive defense against some non-host powdery mildew pathogens by preventing the penetration of the epidermal cell wall by the fungal agents (e.g. Blumeria graminis f. sp. hordei (Bgh)). Maybe involved in seed and ovule maturation and development, probably by regulating the fatty acids homeostasis during suberin and sporopollenin biosynthesis or deposition. In Arabidopsis thaliana (Mouse-ear cress), this protein is Non-specific lipid transfer protein GPI-anchored 1.